A 119-amino-acid polypeptide reads, in one-letter code: Large ribosomal subunit protein bL17 (119 aa).

It belongs to the bacterial ribosomal protein bL17 family. Part of the 50S ribosomal subunit. Contacts protein L32.

In Acholeplasma laidlawii (strain PG-8A), this protein is Large ribosomal subunit protein bL17.